Here is a 122-residue protein sequence, read N- to C-terminus: UPF0102 protein XCV0816 (122 aa).

The protein belongs to the UPF0102 family.

This is UPF0102 protein XCV0816 from Xanthomonas euvesicatoria pv. vesicatoria (strain 85-10) (Xanthomonas campestris pv. vesicatoria).